Reading from the N-terminus, the 320-residue chain is 7-acetyl-epi-neemfruitin B aldo-keto reductase (320 aa).

Aspartate 51 lines the NADP(+) pocket. The active-site Proton donor is the tyrosine 56. NADP(+) is bound by residues glutamine 186 and 264 to 272 (FNKQRMEEN).

The protein belongs to the aldo/keto reductase family. In terms of tissue distribution, mainly expressed in petioles and, to a lower extent, in roots.

It carries out the reaction 7-acetyl-epi-neemfruitin B + AH2 + H2O = (1S,3bR,4R,5aR,9aR,9bR,11aS)-1-[(4R)-5-[(2S)-3,3-dimethyloxiran-2-yl]-1,4-dihydroxybutan-2-yl]-3b,6,6,9a,11a-pentamethyl-7-oxo-1H,2H,3bH,4H,5H,5aH,6H,7H,9aH,9bH,10H,11H,11aH-cyclopenta[a]phenanthren-4-yl acetate + acetate + A + H(+). Its pathway is secondary metabolite biosynthesis; terpenoid biosynthesis. Its function is as follows. Aldo-keto reductase involved in the biosynthesis of limonoids triterpene natural products such as azadirachtin, an antifeedant widely used as bioinsecticide, and possessing many medicinal applications including anti-tumoral, anti-malarial, anti-rheumatic, antibacterial, anti-inflammatory, anti-pyretic and diuretic effects. Can use 7-acetyl-epi-neemfruitin B as substrate. This is 7-acetyl-epi-neemfruitin B aldo-keto reductase from Melia azedarach (Chinaberry tree).